The following is a 229-amino-acid chain: Large ribosomal subunit protein uL1 (229 aa).

The protein belongs to the universal ribosomal protein uL1 family. Part of the 50S ribosomal subunit.

Its function is as follows. Binds directly to 23S rRNA. The L1 stalk is quite mobile in the ribosome, and is involved in E site tRNA release. In terms of biological role, protein L1 is also a translational repressor protein, it controls the translation of the L11 operon by binding to its mRNA. This Histophilus somni (strain 2336) (Haemophilus somnus) protein is Large ribosomal subunit protein uL1.